Reading from the N-terminus, the 371-residue chain is UDP-N-acetylglucosamine--N-acetylmuramyl-(pentapeptide) pyrophosphoryl-undecaprenol N-acetylglucosamine transferase (371 aa).

UDP-N-acetyl-alpha-D-glucosamine contacts are provided by residues 10–12 (TGG), N122, R166, S196, and Q301.

Belongs to the glycosyltransferase 28 family. MurG subfamily.

The protein localises to the cell inner membrane. The enzyme catalyses di-trans,octa-cis-undecaprenyl diphospho-N-acetyl-alpha-D-muramoyl-L-alanyl-D-glutamyl-meso-2,6-diaminopimeloyl-D-alanyl-D-alanine + UDP-N-acetyl-alpha-D-glucosamine = di-trans,octa-cis-undecaprenyl diphospho-[N-acetyl-alpha-D-glucosaminyl-(1-&gt;4)]-N-acetyl-alpha-D-muramoyl-L-alanyl-D-glutamyl-meso-2,6-diaminopimeloyl-D-alanyl-D-alanine + UDP + H(+). Its pathway is cell wall biogenesis; peptidoglycan biosynthesis. In terms of biological role, cell wall formation. Catalyzes the transfer of a GlcNAc subunit on undecaprenyl-pyrophosphoryl-MurNAc-pentapeptide (lipid intermediate I) to form undecaprenyl-pyrophosphoryl-MurNAc-(pentapeptide)GlcNAc (lipid intermediate II). The sequence is that of UDP-N-acetylglucosamine--N-acetylmuramyl-(pentapeptide) pyrophosphoryl-undecaprenol N-acetylglucosamine transferase from Halothermothrix orenii (strain H 168 / OCM 544 / DSM 9562).